A 297-amino-acid chain; its full sequence is Glycerol-3-phosphate dehydrogenase [NAD(P)+] (297 aa).

Residues tryptophan 11, arginine 33, and lysine 79 each contribute to the NADPH site. Sn-glycerol 3-phosphate contacts are provided by lysine 79, glycine 107, and serine 109. Alanine 111 lines the NADPH pocket. Sn-glycerol 3-phosphate contacts are provided by lysine 161, aspartate 214, serine 224, arginine 225, and asparagine 226. The Proton acceptor role is filled by lysine 161. Arginine 225 serves as a coordination point for NADPH. NADPH is bound by residues valine 249 and glutamate 251.

Belongs to the NAD-dependent glycerol-3-phosphate dehydrogenase family.

The protein resides in the cytoplasm. The enzyme catalyses sn-glycerol 3-phosphate + NAD(+) = dihydroxyacetone phosphate + NADH + H(+). The catalysed reaction is sn-glycerol 3-phosphate + NADP(+) = dihydroxyacetone phosphate + NADPH + H(+). The protein operates within membrane lipid metabolism; glycerophospholipid metabolism. Catalyzes the reduction of the glycolytic intermediate dihydroxyacetone phosphate (DHAP) to sn-glycerol 3-phosphate (G3P), the key precursor for phospholipid synthesis. This chain is Glycerol-3-phosphate dehydrogenase [NAD(P)+], found in Campylobacter jejuni subsp. jejuni serotype O:6 (strain 81116 / NCTC 11828).